Consider the following 970-residue polypeptide: Bifunctional glutamine synthetase adenylyltransferase/adenylyl-removing enzyme (970 aa).

The interval 1-454 is adenylyl removase; the sequence is MNSLPPRPSL…HFQQVFAAPQ (454 aa). The adenylyl transferase stretch occupies residues 468-970; that stretch reads QAVLASIWAG…WRRVMEEGKA (503 aa).

Belongs to the GlnE family. Requires Mg(2+) as cofactor.

It catalyses the reaction [glutamine synthetase]-O(4)-(5'-adenylyl)-L-tyrosine + phosphate = [glutamine synthetase]-L-tyrosine + ADP. The catalysed reaction is [glutamine synthetase]-L-tyrosine + ATP = [glutamine synthetase]-O(4)-(5'-adenylyl)-L-tyrosine + diphosphate. In terms of biological role, involved in the regulation of glutamine synthetase GlnA, a key enzyme in the process to assimilate ammonia. When cellular nitrogen levels are high, the C-terminal adenylyl transferase (AT) inactivates GlnA by covalent transfer of an adenylyl group from ATP to specific tyrosine residue of GlnA, thus reducing its activity. Conversely, when nitrogen levels are low, the N-terminal adenylyl removase (AR) activates GlnA by removing the adenylyl group by phosphorolysis, increasing its activity. The regulatory region of GlnE binds the signal transduction protein PII (GlnB) which indicates the nitrogen status of the cell. The protein is Bifunctional glutamine synthetase adenylyltransferase/adenylyl-removing enzyme of Thioalkalivibrio sulfidiphilus (strain HL-EbGR7).